Reading from the N-terminus, the 152-residue chain is MRAEKRWHILLSMILLLITSSQCMDSKEVKESERKTLLNLILQVIGEKPASRRVTSGLYSVSQDAKFSSRENTAHLPKPDNSRPIEIVPRDTSMKDKFIEHFTAGPVKFPSECRTHFHRIYHNTRDCSRPTYYKRCARLLTRLAMSPLCTQS.

A signal peptide spans 1–23 (MRAEKRWHILLSMILLLITSSQC). Disulfide bonds link cysteine 113/cysteine 149 and cysteine 127/cysteine 136.

This sequence belongs to the ALKAL family. In terms of tissue distribution, expressed at low level in the notochord and iridophore stripes, the eye and the swim bladder.

The protein localises to the secreted. It localises to the cell membrane. Functionally, cytokine that acts as a physiological ligand for receptor tyrosine kinases LTK and ALK. Required for iridophore development in the adult eye by acting as a receptor for LTK. The chain is ALK and LTK ligand 1 from Danio rerio (Zebrafish).